The sequence spans 501 residues: MCEMSEEYRESAPKGPPPPRLGTGDQKCVKCKEGLPVVVIRAGDAFCRDCFKALYVHKFRAMLGKSRLIFPGEKVLLAWSGGPSSSSMVWQVLEGLSRDSAKRLRFVPGVVYIDEGAACGQSPEDRARTLAEVKLALQTTGFPWHAVALEEVFSLPPSALRCSAQEAAGTEGAYKAAVDSFLQQQHALGTNGVERQSQHCAQDPQSPTGPPTTAQTQALSRLFDSVKTLTAKEELLQTLRTHLILHVARNHGYSKVMTGDSCTRLAIKLMTSLALGRGAFLAWDTGFSDERHGDVVVVRPMREHTLKEVAFYNRLFAVPSICTPALDTKAPEKASIHRLMEAFILRLQAQFPSTVSTVYRTSEKLVKAPRAGCAAGPRCLLCMCTLDVDTADSATAFGAQTSHLPQMQTPVTQARAAAGPCCCAGMGGAPGCCKREDPRAQVMEQLCYGCRVNMKDLPSLELLPPYILSEAQLRSQRATAEQEIREYLLGDSEDEAGTGES.

Over residues 1–12 (MCEMSEEYRESA) the composition is skewed to basic and acidic residues. Disordered regions lie at residues 1–23 (MCEM…RLGT) and 192–214 (GVER…PTTA). The residue at position 2 (Cys2) is an N-acetylcysteine. The residue at position 492 (Ser492) is a Phosphoserine.

It belongs to the CTU2/NCS2 family. Component of a complex at least composed of URM1, CTU2/NCS2 and CTU1/ATPBD3.

It localises to the cytoplasm. The protein operates within tRNA modification; 5-methoxycarbonylmethyl-2-thiouridine-tRNA biosynthesis. Plays a central role in 2-thiolation of mcm(5)S(2)U at tRNA wobble positions of tRNA(Lys), tRNA(Glu) and tRNA(Gln). May act by forming a heterodimer with CTU1/ATPBD3 that ligates sulfur from thiocarboxylated URM1 onto the uridine of tRNAs at wobble position. The sequence is that of Cytoplasmic tRNA 2-thiolation protein 2 from Bos taurus (Bovine).